The sequence spans 478 residues: Lactate utilization protein B (478 aa).

2 4Fe-4S ferredoxin-type domains span residues 303–333 (GTEFQSALHCIRCAACINVCPVYRHVGGHAY) and 352–381 (YDDHKELPYASSLCAACTEACPVKIPLHEQ). [4Fe-4S] cluster-binding residues include C312, C315, C318, C322, C365, C368, and C372.

This sequence belongs to the LutB/YkgF family.

Is involved in L-lactate degradation and allows cells to grow with lactate as the sole carbon source. Has probably a role as an electron transporter during oxidation of L-lactate. This chain is Lactate utilization protein B, found in Oceanobacillus iheyensis (strain DSM 14371 / CIP 107618 / JCM 11309 / KCTC 3954 / HTE831).